Reading from the N-terminus, the 224-residue chain is Peptidyl-prolyl cis-trans isomerase FKBP3 (224 aa).

N-acetylalanine is present on A2. A Phosphoserine modification is found at S36. The disordered stretch occupies residues 88-118 (VKLSDDKPKDSKSEETLDEGPPKYTKSILKK). Residues 89-102 (KLSDDKPKDSKSEE) are compositionally biased toward basic and acidic residues. The residue at position 99 (K99) is an N6-acetyllysine. The PPIase FKBP-type domain maps to 128–224 (GDVVHCWYTG…IFEVELVDID (97 aa)). A Phosphoserine modification is found at S152. Residue K170 is modified to N6-acetyllysine.

Belongs to the FKBP-type PPIase family.

It localises to the nucleus. The enzyme catalyses [protein]-peptidylproline (omega=180) = [protein]-peptidylproline (omega=0). With respect to regulation, inhibited preferentially by rapamycin over FK506. Functionally, FK506- and rapamycin-binding proteins (FKBPs) constitute a family of receptors for the two immunosuppressants which inhibit T-cell proliferation by arresting two distinct cytoplasmic signal transmission pathways. PPIases accelerate the folding of proteins. The polypeptide is Peptidyl-prolyl cis-trans isomerase FKBP3 (Fkbp3) (Mus musculus (Mouse)).